The following is an 898-amino-acid chain: MLPSSGDSSKENCAPQDGIVEKEGPNKPFKKKNVKQRNATPQGAGSETSSNAEDKQEEAPILTNAPKDIISMQIQETKAFLSEYEEFVDTDYPKTTFTHVPRKFLSVSPFTPIEADAEGEFLPDADSKCVICHEEKDKTGKSDLITCHGYINGEMDDGKRLLGNIPMFPCRSKFHASCMINYNSGGFHFQYAARLECQARLLCPLHCCNSCNLDHHKQSAYVGDIAECALCLRAFHLTSCYPSGGRDLNVSITIGGKVEKFEMIICPAHYLPGADVQFYNKHKKRKNAVTVVPKADVTMKSHIKACCVIGCEKSSNSKTIMCKTCCRSFHSGCREVETLNGKPIPDDQCESCVCGDPIPQNTLILAKWTDNSFWLALTLDWYKYPTGNRGNINFERLGYTVVQWLIPQENDKEKQPLMSIVPVSDIARLTKNYFSLAKNSTLRNLWEEKYEEQADTALKRCPYVCKTVFGRLRTSVYYKCEPKLEEYHNNEVCNCEGADRCTKLSCQYLADDYECPPSCSKKGVCHNRQVSMGIVSEKIKLAATLCKGYGVFAKGQIEKDEYICEYVGEIIDKAEKKRRLDSVSISRDFQANHYMMELHKGLTVDAARYGNISRYINHSCDPNAASFVTKVFVKKTKEGSLYDTRSYIRAIRTIDDGDEITFSYNMNNEENLPDCECGAENCMGTMGKAKREKPEVADSSEKAAKKNKSSKKKSVKNQNRKSQEAGKNGTASKKSEISPSKPSTSSASSTSFVQQASWPISQNKKNLKKNSNQPVADTGSTLSTSTELNFHEKPQELLSPVSSRSRAASSSTPRAQKSKSRRDDVESEAPPVKRATPSLQTIQETGKAIEFPATKSAITKARALSTQSVPSPHTVEVKVRAISTRGRVQKETKRFEPI.

A disordered region spans residues 1–68 (MLPSSGDSSK…APILTNAPKD (68 aa)). Over residues 36–51 (QRNATPQGAGSETSSN) the composition is skewed to polar residues. 2 consecutive PHD-type zinc fingers follow at residues 126–214 (DSKC…CNLD) and 303–355 (IKAC…CVCG). Residues 537-665 (EKIKLAATLC…DGDEITFSYN (129 aa)) enclose the SET domain. The 17-residue stretch at 671-687 (NLPDCECGAENCMGTMG) folds into the Post-SET domain. Positions 689–847 (AKREKPEVAD…SLQTIQETGK (159 aa)) are disordered. The segment covering 692-704 (EKPEVADSSEKAA) has biased composition (basic and acidic residues). The segment covering 705 to 719 (KKNKSSKKKSVKNQN) has biased composition (basic residues). Composition is skewed to low complexity over residues 737-751 (ISPS…SSTS) and 761-773 (SQNK…NSNQ). Residues 774-788 (PVADTGSTLSTSTEL) are compositionally biased toward polar residues. The segment covering 802–811 (SSRSRAASSS) has biased composition (low complexity).

It belongs to the class V-like SAM-binding methyltransferase superfamily. Histone-lysine methyltransferase family. SET2 subfamily. In adults, it is predominantly expressed in the germline, and weakly expressed in intestinal cells.

Its subcellular location is the nucleus. The protein localises to the chromosome. It catalyses the reaction L-lysyl(36)-[histone H3] + 2 S-adenosyl-L-methionine = N(6),N(6)-dimethyl-L-lysyl(36)-[histone H3] + 2 S-adenosyl-L-homocysteine + 2 H(+). Histone methyltransferase. Dimethylates 'Lys-36' of histone H3, a specific tag for epigenetic transcriptional activation. Plays a central role in early development and is responsible for all H3 'Lys-36' dimethylation until about the 40-cell stage. Indirectly involved in the global inactivation of the X chromosomes in germline cells, possibly by excluding the mes-2-mes-3-mes-6 repressive Polycomb complex from the autosomes. Not related to transcription elongation. Required for small-RNA-induced H3K27 trimethylation. May suppress sensitivity to RNAi. May regulate the expression of genes required for vulval development. The polypeptide is Histone-lysine N-methyltransferase mes-4 (Caenorhabditis elegans).